The primary structure comprises 456 residues: MRKSPGLSDCLWAWILLLSTLTGRSYGQPSLQDELKDNTTVFTRILDRLLDGYDNRLRPGLGERVTEVKTDIFVTSFGPVSDHDMEYTIDVFFRQSWKDERLKFKGPMTVLRLNNLMASKIWTPDTFFHNGKKSVAHNMTMPNKLLRITEDGTLLYTMRLTVRAECPMHLEDFPMDAHACPLKFGSYAYTRAEVVYEWTREPARSVVVAEDGSRLNQYDLLGQTVDSGIVQSSTGEYVVMTTHFHLKRKIGYFVIQTYLPCIMTVILSQVSFWLNRESVPARTVFGVTTVLTMTTLSISARNSLPKVAYATAMDWFIAVCYAFVFSALIEFATVNYFTKRGYAWDGKSVVPEKPKKVKDPLIKKNNTYAPTATSYTPNLAGGDPGLATIAKSATIEPKEVKPETKPPEPKKTFNSVSKIDRLSRIAFPLLFGIFNLIYWATYLNREPQLKAPTPHQ.

A signal peptide spans 1 to 27 (MRKSPGLSDCLWAWILLLSTLTGRSYG). Residues 28–253 (QPSLQDELKD…FHLKRKIGYF (226 aa)) lie on the Extracellular side of the membrane. The N-linked (GlcNAc...) asparagine glycan is linked to N38. Position 94 (R94) interacts with 4-aminobutanoate. A glycan (N-linked (GlcNAc...) asparagine) is linked at N138. Residue T157 coordinates 4-aminobutanoate. An intrachain disulfide couples C166 to C180. The chain crosses the membrane as a helical span at residues 254-274 (VIQTYLPCIMTVILSQVSFWL). The Cytoplasmic portion of the chain corresponds to 275-279 (NRESV). The helical transmembrane segment at 280-301 (PARTVFGVTTVLTMTTLSISAR) threads the bilayer. The Extracellular segment spans residues 302-311 (NSLPKVAYAT). Residues 312–333 (AMDWFIAVCYAFVFSALIEFAT) form a helical membrane-spanning segment. Residues 334 to 421 (VNYFTKRGYA…TFNSVSKIDR (88 aa)) lie on the Cytoplasmic side of the membrane. The helical transmembrane segment at 422 to 441 (LSRIAFPLLFGIFNLIYWAT) threads the bilayer. The Extracellular segment spans residues 442 to 456 (YLNREPQLKAPTPHQ).

Belongs to the ligand-gated ion channel (TC 1.A.9) family. Gamma-aminobutyric acid receptor (TC 1.A.9.5) subfamily. GABRA1 sub-subfamily. In terms of assembly, heteropentamer, formed by a combination of alpha (GABRA1-6), beta (GABRB1-3), gamma (GABRG1-3), delta (GABRD), epsilon (GABRE), rho (GABRR1-3), pi (GABRP) and theta (GABRQ) subunits, each subunit exhibiting distinct physiological and pharmacological properties. Interacts with UBQLN1. Interacts with TRAK1. Interacts with KIF21B. Identified in a complex of 720 kDa composed of LHFPL4, NLGN2, GABRA1, GABRB2, GABRG2 and GABRB3. Interacts with LHFPL4. Interacts with NLGN2. Interacts with SHISA7; interaction leads to the regulation of GABA(A) receptor trafficking, channel deactivation kinetics and pharmacology.

It localises to the postsynaptic cell membrane. Its subcellular location is the cell membrane. The protein localises to the cytoplasmic vesicle membrane. It carries out the reaction chloride(in) = chloride(out). With respect to regulation, allosterically activated by benzodiazepines, the neuroanesthetic alphaxalone and pentobarbital. Inhibited by the antagonist bicuculline. Potentiated by histamine. Its function is as follows. Alpha subunit of the heteropentameric ligand-gated chloride channel gated by gamma-aminobutyric acid (GABA), a major inhibitory neurotransmitter in the brain. GABA-gated chloride channels, also named GABA(A) receptors (GABAAR), consist of five subunits arranged around a central pore and contain GABA active binding site(s) located at the alpha and beta subunit interface(s). When activated by GABA, GABAARs selectively allow the flow of chloride anions across the cell membrane down their electrochemical gradient. Alpha-1/GABRA1-containing GABAARs are largely synaptic. Chloride influx into the postsynaptic neuron following GABAAR opening decreases the neuron ability to generate a new action potential, thereby reducing nerve transmission. GABAARs containing alpha-1 and beta-2 or -3 subunits exhibit synaptogenic activity; the gamma-2 subunit being necessary but not sufficient to induce rapid synaptic contacts formation. GABAARs function also as histamine receptor where histamine binds at the interface of two neighboring beta subunits and potentiates GABA response. GABAARs containing alpha, beta and epsilon subunits also permit spontaneous chloride channel activity while preserving the structural information required for GABA-gated openings. Alpha-1-mediated plasticity in the orbitofrontal cortex regulates context-dependent action selection. Together with rho subunits, may also control neuronal and glial GABAergic transmission in the cerebellum. This is Gamma-aminobutyric acid receptor subunit alpha-1 (GABRA1) from Pongo abelii (Sumatran orangutan).